Here is a 423-residue protein sequence, read N- to C-terminus: CDP-diacylglycerol--serine O-phosphatidyltransferase 2 (423 aa).

The next 9 helical transmembrane spans lie at 38-58, 77-97, 103-123, 195-215, 222-242, 294-314, 319-339, 359-379, and 390-410; these read PHTI…SGAL, WAMI…TILI, VWRL…FLLF, LLLW…RHML, WWDS…WAGM, FVQV…TFFL, WIPP…LIAI, GAFC…CMKF, and TWLI…LLAW.

This sequence belongs to the CDP-alcohol phosphatidyltransferase class-I family.

Its subcellular location is the endoplasmic reticulum membrane. The catalysed reaction is a CDP-1,2-diacyl-sn-glycerol + L-serine = a 1,2-diacyl-sn-glycero-3-phospho-L-serine + CMP + H(+). It functions in the pathway phospholipid metabolism; phosphatidylethanolamine biosynthesis; phosphatidylethanolamine from CDP-diacylglycerol: step 1/2. Its function is as follows. Catalyzes a base-exchange reaction in which the polar head group of phosphatidylethanolamine (PE) or phosphatidylcholine (PC) is replaced by L-serine. This chain is CDP-diacylglycerol--serine O-phosphatidyltransferase 2 (PSS2), found in Oryza sativa subsp. japonica (Rice).